The following is a 203-amino-acid chain: Probable GTP-binding protein EngB (203 aa).

The EngB-type G domain occupies 24–199; sequence DGSEVAFAGR…HTVIETWLGL (176 aa). Residues 32-39, 59-63, 77-80, 144-147, and 178-180 each bind GTP; these read GRSNAGKS, GRTQQ, DLPG, TKAD, and FSS. S39 and T61 together coordinate Mg(2+).

The protein belongs to the TRAFAC class TrmE-Era-EngA-EngB-Septin-like GTPase superfamily. EngB GTPase family. The cofactor is Mg(2+).

Functionally, necessary for normal cell division and for the maintenance of normal septation. This chain is Probable GTP-binding protein EngB, found in Xylella fastidiosa (strain Temecula1 / ATCC 700964).